Reading from the N-terminus, the 418-residue chain is Tyrosine--tRNA ligase (418 aa).

Y34 lines the L-tyrosine pocket. Positions 39–48 match the 'HIGH' region motif; it reads PTADSLHLGH. L-tyrosine contacts are provided by Y169 and Q173. Residues 229 to 233 carry the 'KMSKS' region motif; that stretch reads KFGKS. Residue K232 coordinates ATP. Residues 352 to 418 enclose the S4 RNA-binding domain; that stretch reads HNIVEILVAA…GKKKYAVLTY (67 aa).

The protein belongs to the class-I aminoacyl-tRNA synthetase family. TyrS type 1 subfamily. Homodimer.

The protein resides in the cytoplasm. It carries out the reaction tRNA(Tyr) + L-tyrosine + ATP = L-tyrosyl-tRNA(Tyr) + AMP + diphosphate + H(+). Its function is as follows. Catalyzes the attachment of tyrosine to tRNA(Tyr) in a two-step reaction: tyrosine is first activated by ATP to form Tyr-AMP and then transferred to the acceptor end of tRNA(Tyr). This chain is Tyrosine--tRNA ligase, found in Streptococcus pyogenes serotype M1.